Consider the following 345-residue polypeptide: MVVKNSIKFNSQSERKSLEETKVPPIFGLPPDALDDKKPTSDFAVPIIDFAGVHKSREAVVEKIKAAAENWGIFQVINHGVPLSVLEEIQNGVVRFHEEDPEVKKSYFSLDLTKTFIYHNNFELYSSSAGNWRDSFVCYMDPDPSNPEDLPVACRDAMIGYSKHVMSLGGLLFELLSEALGLNSDTLKSMGCMKGLHMICHYYPPCPQPDQTLGTSKHSDNTFITILLQDNIGGLQILHQDCWVDVSPLPGALIINIGDFLQLMTNDKFISVDHRVLTNRVGPRISIACFFSSSMNPNSTVYGPIKELLSEENPPKYRDFTIPEYSKGYIEKGLDGTSHLSHYRI.

A Glycyl lysine isopeptide (Lys-Gly) (interchain with G-Cter in ubiquitin) cross-link involves residue Lys16. The region spanning Lys194–Ser293 is the Fe2OG dioxygenase domain. Residues His218, Asp220, and His274 each coordinate Fe cation. Arg284 lines the 2-oxoglutarate pocket.

The protein belongs to the iron/ascorbate-dependent oxidoreductase family. Requires Fe(2+) as cofactor.

This Arabidopsis thaliana (Mouse-ear cress) protein is 1-aminocyclopropane-1-carboxylate oxidase homolog 7.